Consider the following 970-residue polypeptide: Sodium/calcium exchanger 1 (970 aa).

The N-terminal stretch at 1–32 (MLRLRLSPTFSVGFHLLAFVPLLFSHVDLISA) is a signal peptide. Topologically, residues 33 to 71 (DTEMEGEGNETGECTGSYYCKKGVILPIWEPQDPSFGDK) are extracellular. The N-linked (GlcNAc...) asparagine glycan is linked to Asn41. The helical transmembrane segment at 72 to 92 (IARATVYFVAMVYMFLGVSII) threads the bilayer. At 93-133 (ADRFMSSIEVITSQEKEITIKKPNGETTKTTVRIWNETVSN) the chain is on the cytoplasmic side. A helical membrane pass occupies residues 134-154 (LTLMALGSSAPEILLSVIEVC). The Alpha-1 repeat unit spans residues 138–178 (ALGSSAPEILLSVIEVCGHNFTAGDLGPSTIVGSAAFNMFI). At 155-167 (GHNFTAGDLGPST) the chain is on the extracellular side. Asn157 carries N-linked (GlcNAc...) asparagine glycosylation. Residues 168–188 (IVGSAAFNMFIIIALCVYVVP) traverse the membrane as a helical segment. Topologically, residues 189–201 (DGETRKIKHLRVF) are cytoplasmic. A helical transmembrane segment spans residues 202–222 (FVTAAWSIFAYTWLYIILSVI). The Extracellular segment spans residues 223–228 (SPGVVE). A helical transmembrane segment spans residues 229-249 (VWEGLLTFFFFPICVVFAWVA). Topologically, residues 250–797 (DRRLLFYKYV…FVPPTEYWNG (548 aa)) are cytoplasmic. The putative calmodulin-binding region stretch occupies residues 251–270 (RRLLFYKYVYKRYRAGKQRG). Phosphoserine is present on residues Ser282 and Ser389. 2 consecutive Calx-beta domains span residues 393-493 (VNTE…VHLS) and 524-624 (ATVT…LEIG). 16 residues coordinate Ca(2+): Glu417, Asp453, Asp478, Asp479, Ile481, Glu483, Glu486, Asp530, Asp531, Asp532, Glu548, Asp584, Asp610, Glu611, Glu612, and Glu715. A helical membrane pass occupies residues 798 to 818 (WACFIVSILMIGILTAFIGDL). Topologically, residues 819 to 821 (ASH) are extracellular. A helical membrane pass occupies residues 822–842 (FGCTIGLKDSVTAVVFVALGT). One copy of the Alpha-2 repeat lies at 839 to 875 (ALGTSVPDTFASKVAATQDQYADASIGNVTGSNAVNV). The Cytoplasmic portion of the chain corresponds to 843–871 (SVPDTFASKVAATQDQYADASIGNVTGSN). A helical membrane pass occupies residues 872–892 (AVNVFLGIGVAWSIAAIYHAA). The Extracellular segment spans residues 893–903 (NGEQFKVSPGT). A helical transmembrane segment spans residues 904-924 (LAFSVTLFTIFAFINVGVLLY). Topologically, residues 925-941 (RRRPEIGGELGGPRTAK) are cytoplasmic. The chain crosses the membrane as a helical span at residues 942–962 (LLTSCLFVLLWLLYIFFSSLE). Residues 963–970 (AYCHIKGF) are Extracellular-facing.

This sequence belongs to the Ca(2+):cation antiporter (CaCA) (TC 2.A.19) family. SLC8 subfamily. In terms of tissue distribution, detected in heart (at protein level). Detected in heart.

It is found in the cell membrane. The enzyme catalyses Ca(2+)(in) + 3 Na(+)(out) = Ca(2+)(out) + 3 Na(+)(in). Its activity is regulated as follows. Activated by micromolar levels of Ca(2+). Functionally, mediates the exchange of one Ca(2+) ion against three to four Na(+) ions across the cell membrane, and thereby contributes to the regulation of cytoplasmic Ca(2+) levels and Ca(2+)-dependent cellular processes. Contributes to Ca(2+) transport during excitation-contraction coupling in muscle. In a first phase, voltage-gated channels mediate the rapid increase of cytoplasmic Ca(2+) levels due to release of Ca(2+) stores from the endoplasmic reticulum. SLC8A1 mediates the export of Ca(2+) from the cell during the next phase, so that cytoplasmic Ca(2+) levels rapidly return to baseline. Required for normal embryonic heart development and the onset of heart contractions. This chain is Sodium/calcium exchanger 1 (SLC8A1), found in Felis catus (Cat).